An 898-amino-acid chain; its full sequence is Netrin receptor UNC5A (898 aa).

A signal peptide spans 1 to 25; that stretch reads MAVRPGLWPVLLGIVLAAWLRGSGA. The Extracellular segment spans residues 26 to 361; that stretch reads QQSATVANPV…TASCPEDVAL (336 aa). The 98-residue stretch at 44–141 folds into the Ig-like domain; that stretch reads PHFLVEPEDV…SGTTKSQKAY (98 aa). 3 disulfide bridges follow: Cys65–Cys126, Cys77–Cys124, and Cys170–Cys221. N-linked (GlcNAc...) asparagine glycosylation is found at Asn107 and Asn218. In terms of domain architecture, Ig-like C2-type spans 155–238; it reads PLAKEVSLEQ…RRRSTSAAVI (84 aa). 2 consecutive TSP type-1 domains span residues 242 to 296 and 298 to 350; these read NGGW…TLCP and DGSW…DLCL. Residues Trp245, Trp248, and Trp251 are each glycosylated (C-linked (Man) tryptophan). 3 disulfide bridges follow: Cys254-Cys291, Cys258-Cys295, and Cys269-Cys281. C-linked (Man) tryptophan glycosylation is found at Trp301 and Trp304. 3 disulfides stabilise this stretch: Cys310–Cys344, Cys314–Cys349, and Cys322–Cys334. N-linked (GlcNAc...) asparagine glycosylation is present at Asn343. A helical transmembrane segment spans residues 362-382; that stretch reads YIGLVAVAVCLFLLLLALGLI. Topologically, residues 383–898 are cytoplasmic; the sequence is YCRKKEGLDS…GLFTVSEAEC (516 aa). Positions 497–640 constitute a ZU5 domain; that stretch reads NMAYGTFNFL…LGRFALVGEA (144 aa). The interaction with DCC stretch occupies residues 661–679; sequence SLEYNIRVYCLHDTHDALK. A Death domain is found at 817–897; sequence QKIIASLDPP…AGLFTVSEAE (81 aa).

Belongs to the unc-5 family. As to quaternary structure, homodimer and homooligomer. Interacts with the cytoplasmic part of DCC. Interacts with MAGED1. Interacts with PRKCABP, possibly mediating some interaction with PKC. Interacts (via extracellular domain) with FLRT2 (via extracellular domain). Interacts (via extracellular domain) with FLRT3 (via extracellular domain). Phosphorylated on cytoplasmic tyrosine residues. Phosphorylated by PKC in vitro. Post-translationally, proteolytically cleaved by caspases during apoptosis. The cleavage does not take place when the receptor is associated with netrin ligand. Its cleavage by caspases is required to induce apoptosis. In terms of processing, the two extracellular TSRs of UNC5A contain WxxWxxWxxC motifs that can be C-mannosylated on all tryptophans. DPY19L1 preferentially mannosylates the first two tryptophans and DPY19L3 prefers the third. C-mannosylation by DPY19L1 is required for transport of UNC5A from the endoplasmic reticulum to the cell surface. As to expression, mainly expressed in regions of differentiating neurons. Expressed at early stages of neural tube development in the ventral spinal cord. In developing hindbrain, it colocalizes with a number of cranial motor neuron subpopulations from embryonic E11 to E14, while DCC is expressed by motor neurons at E12. Also expressed in non-neural structures, such as the basal plane of the hindbrain and midbrain, in the developing hypothalamus, thalamus and in the pallidum.

It is found in the cell membrane. Its subcellular location is the membrane raft. The protein localises to the cell projection. The protein resides in the neuron projection. In terms of biological role, receptor for netrin required for axon guidance. Functions in the netrin signaling pathway and promotes neurite outgrowth in response to NTN1. Mediates axon repulsion of neuronal growth cones in the developing nervous system in response to netrin. Axon repulsion in growth cones may be mediated by its association with DCC that may trigger signaling for repulsion. It also acts as a dependence receptor required for apoptosis induction when not associated with netrin ligand. The chain is Netrin receptor UNC5A (Unc5a) from Rattus norvegicus (Rat).